The following is a 359-amino-acid chain: Fructose-bisphosphate aldolase class 2 (359 aa).

Lys-9 bears the N6-acetyllysine mark. Ser-62 contacts D-glyceraldehyde 3-phosphate. The active-site Proton donor is Asp-110. Zn(2+) is bound by residues His-111, Asp-145, Glu-175, and His-227. Gly-228 serves as a coordination point for dihydroxyacetone phosphate. His-265 serves as a coordination point for Zn(2+). Dihydroxyacetone phosphate contacts are provided by residues 266–268 (GGS) and 287–290 (NIDT).

It belongs to the class II fructose-bisphosphate aldolase family. In terms of assembly, homodimer. Zn(2+) is required as a cofactor.

It carries out the reaction beta-D-fructose 1,6-bisphosphate = D-glyceraldehyde 3-phosphate + dihydroxyacetone phosphate. The protein operates within carbohydrate degradation; glycolysis; D-glyceraldehyde 3-phosphate and glycerone phosphate from D-glucose: step 4/4. In terms of biological role, catalyzes the aldol condensation of dihydroxyacetone phosphate (DHAP or glycerone-phosphate) with glyceraldehyde 3-phosphate (G3P) to form fructose 1,6-bisphosphate (FBP) in gluconeogenesis and the reverse reaction in glycolysis. This Escherichia coli O157:H7 protein is Fructose-bisphosphate aldolase class 2 (fbaA).